Consider the following 256-residue polypeptide: Type III pantothenate kinase (256 aa).

6–13 (DIGNSSIV) contacts ATP. Residues Tyr-101 and 108–111 (GADR) contribute to the substrate site. Residue Asp-110 is the Proton acceptor of the active site. Position 130 (Asp-130) interacts with K(+). Residue Thr-133 coordinates ATP. Thr-185 lines the substrate pocket.

It belongs to the type III pantothenate kinase family. Homodimer. The cofactor is NH4(+). K(+) serves as cofactor.

The protein resides in the cytoplasm. The enzyme catalyses (R)-pantothenate + ATP = (R)-4'-phosphopantothenate + ADP + H(+). The protein operates within cofactor biosynthesis; coenzyme A biosynthesis; CoA from (R)-pantothenate: step 1/5. Functionally, catalyzes the phosphorylation of pantothenate (Pan), the first step in CoA biosynthesis. The polypeptide is Type III pantothenate kinase (Shouchella clausii (strain KSM-K16) (Alkalihalobacillus clausii)).